A 359-amino-acid polypeptide reads, in one-letter code: Type II restriction enzyme HgiDI (359 aa).

It catalyses the reaction Endonucleolytic cleavage of DNA to give specific double-stranded fragments with terminal 5'-phosphates.. Its function is as follows. A P subtype restriction enzyme that recognizes the double-stranded sequence 5'-GRCGYC-3' and cleaves after R-2. This chain is Type II restriction enzyme HgiDI, found in Herpetosiphon aurantiacus (Herpetosiphon giganteus).